The chain runs to 446 residues: B3 domain-containing protein REM12 (446 aa).

The segment at 1–46 is disordered; it reads MVLNSSDLGPSRCDIRDLPAPSSTNDQGKTELARKKKVKRSNTEIE. 2 DNA-binding regions (TF-B3) span residues 56-153 and 193-289; these read CFVA…FCST and FMTL…VNTQ. The tract at residues 295-334 is disordered; sequence SQQGECSRDSEKESSICAEPSRGNKKWKATNNRKERRDSS. The segment at residues 341–435 is a DNA-binding region (TF-B3 3); it reads YVTLTLTPED…TTPVFKFCSN (95 aa).

The protein localises to the nucleus. This Arabidopsis thaliana (Mouse-ear cress) protein is B3 domain-containing protein REM12 (REM12).